A 235-amino-acid chain; its full sequence is MTELARLKFYATQPHSCSYLPDEQATTLFLDPSQPMDVNVYADLSEMGFRRSGDHLYRPHCQNCNACVPARIPAARFIPNRQQRRILKRNADLTVTAARPAFKEEYFELYRRYIETRHADGDMYPPSRDQFSTFLVRDLPFCWFYEFRLEGHLMAVAVCDLLPNGLSAVYTFYEPDEERRSLGRFAILWQITEALRQDLEAVYLGYWIKNCKKMNYKTQYRPIELLINQRWVTLN.

The protein belongs to the R-transferase family. Bpt subfamily.

It localises to the cytoplasm. The enzyme catalyses N-terminal L-glutamyl-[protein] + L-leucyl-tRNA(Leu) = N-terminal L-leucyl-L-glutamyl-[protein] + tRNA(Leu) + H(+). It catalyses the reaction N-terminal L-aspartyl-[protein] + L-leucyl-tRNA(Leu) = N-terminal L-leucyl-L-aspartyl-[protein] + tRNA(Leu) + H(+). In terms of biological role, functions in the N-end rule pathway of protein degradation where it conjugates Leu from its aminoacyl-tRNA to the N-termini of proteins containing an N-terminal aspartate or glutamate. This is Aspartate/glutamate leucyltransferase from Pseudomonas putida (strain GB-1).